We begin with the raw amino-acid sequence, 328 residues long: L-lactate dehydrogenase (328 aa).

NAD(+) is bound by residues Val-18, Glu-39, Lys-46, Tyr-71, and 85 to 86; that span reads GA. Substrate-binding residues include Gln-88 and Arg-94. NAD(+)-binding positions include Ser-107, 124–126, and Ser-149; that span reads AAN. 126–129 provides a ligand contact to substrate; it reads NPVD. 154 to 157 contributes to the substrate binding site; sequence DSAR. Beta-D-fructose 1,6-bisphosphate-binding residues include Arg-159 and His-174. His-181 (proton acceptor) is an active-site residue. Position 226 is a phosphotyrosine (Tyr-226). Position 235 (Thr-235) interacts with substrate.

This sequence belongs to the LDH/MDH superfamily. LDH family. Homotetramer.

It is found in the cytoplasm. It catalyses the reaction (S)-lactate + NAD(+) = pyruvate + NADH + H(+). The protein operates within fermentation; pyruvate fermentation to lactate; (S)-lactate from pyruvate: step 1/1. Its activity is regulated as follows. Allosterically activated by fructose 1,6-bisphosphate (FBP). Its function is as follows. Catalyzes the conversion of lactate to pyruvate. In Streptococcus thermophilus (strain ATCC BAA-250 / LMG 18311), this protein is L-lactate dehydrogenase.